We begin with the raw amino-acid sequence, 317 residues long: tRNA dimethylallyltransferase (317 aa).

Position 14-21 (14-21 (GPTAVGKT)) interacts with ATP. Substrate is bound at residue 16 to 21 (TAVGKT). Residues 39–42 (DSMQ) form an interaction with substrate tRNA region.

Belongs to the IPP transferase family. In terms of assembly, monomer. Requires Mg(2+) as cofactor.

The enzyme catalyses adenosine(37) in tRNA + dimethylallyl diphosphate = N(6)-dimethylallyladenosine(37) in tRNA + diphosphate. Catalyzes the transfer of a dimethylallyl group onto the adenine at position 37 in tRNAs that read codons beginning with uridine, leading to the formation of N6-(dimethylallyl)adenosine (i(6)A). The chain is tRNA dimethylallyltransferase from Bacillus cereus (strain AH187).